Consider the following 277-residue polypeptide: MVTANSTVKVGNVTFSNSAPLALIAGPCQMETRDHAFEMAGHLKEMTDKLGIGLVYKSSFDKANRTSLKAARGIGLEKALEVFSDLKKEYGFPVLTDIHTEEQCAAVAPVVDVLQIPAFLCRQTDLLIAAARTGRVVNVKKGQFLAPWDMKNVLAKITESGNPNVLATERGVSFGYNTLVSDMRALPIMAGLGAPVIFDATHSVQQPGGQGGSTGGQREFVETLARAAVAVGVAGLFIETHEDPDNAPSDGPNMVPIDKMPALLEKLMAFDRIAKAL.

This sequence belongs to the KdsA family.

Its subcellular location is the cytoplasm. The enzyme catalyses D-arabinose 5-phosphate + phosphoenolpyruvate + H2O = 3-deoxy-alpha-D-manno-2-octulosonate-8-phosphate + phosphate. The protein operates within carbohydrate biosynthesis; 3-deoxy-D-manno-octulosonate biosynthesis; 3-deoxy-D-manno-octulosonate from D-ribulose 5-phosphate: step 2/3. It participates in bacterial outer membrane biogenesis; lipopolysaccharide biosynthesis. This Brucella canis (strain ATCC 23365 / NCTC 10854 / RM-666) protein is 2-dehydro-3-deoxyphosphooctonate aldolase.